Consider the following 469-residue polypeptide: Sulfate adenylyltransferase subunit 1 (469 aa).

Residues 22–238 (KQLLRFITCG…LETIKIDEDR (217 aa)) enclose the tr-type G domain. The segment at 31-38 (GSVDDGKS) is G1. A GTP-binding site is contributed by 31-38 (GSVDDGKS). The G2 stretch occupies residues 89-93 (GITID). Residues 110–113 (DTPG) form a G3 region. GTP-binding positions include 110 to 114 (DTPGH) and 165 to 168 (NKMD). Positions 165–168 (NKMD) are G4. The interval 203 to 205 (SAL) is G5.

The protein belongs to the TRAFAC class translation factor GTPase superfamily. Classic translation factor GTPase family. CysN/NodQ subfamily. As to quaternary structure, heterodimer composed of CysD, the smaller subunit, and CysN.

The enzyme catalyses sulfate + ATP + H(+) = adenosine 5'-phosphosulfate + diphosphate. The protein operates within sulfur metabolism; hydrogen sulfide biosynthesis; sulfite from sulfate: step 1/3. In terms of biological role, with CysD forms the ATP sulfurylase (ATPS) that catalyzes the adenylation of sulfate producing adenosine 5'-phosphosulfate (APS) and diphosphate, the first enzymatic step in sulfur assimilation pathway. APS synthesis involves the formation of a high-energy phosphoric-sulfuric acid anhydride bond driven by GTP hydrolysis by CysN coupled to ATP hydrolysis by CysD. The polypeptide is Sulfate adenylyltransferase subunit 1 (Aliarcobacter butzleri (strain RM4018) (Arcobacter butzleri)).